Here is a 49-residue protein sequence, read N- to C-terminus: Small integral membrane protein 27 (49 aa).

The helical transmembrane segment at 11–31 (WTYSLLLLAIVLLSWGFVIYA) threads the bilayer.

The protein resides in the membrane. This is Small integral membrane protein 27 from Mus musculus (Mouse).